A 247-amino-acid chain; its full sequence is Adenosylcobinamide-GDP ribazoletransferase (247 aa).

The next 6 helical transmembrane spans lie at 34-54, 59-79, 113-133, 138-158, 171-193, and 197-219; these read IVMFPFIGLILGGVSGLIFIL, CGIPLAALFCILALALLTGGF, GGLALIFVLLAKILVVSELAL, MLAALAAACAAGRGSAVLLMY, VFIGKVSGRQTCITLGLAIIIAT, and PGMQGLAAMVVTCAAIFILGQLL.

The protein belongs to the CobS family. The cofactor is Mg(2+).

It is found in the cell inner membrane. It catalyses the reaction alpha-ribazole + adenosylcob(III)inamide-GDP = adenosylcob(III)alamin + GMP + H(+). The catalysed reaction is alpha-ribazole 5'-phosphate + adenosylcob(III)inamide-GDP = adenosylcob(III)alamin 5'-phosphate + GMP + H(+). It participates in cofactor biosynthesis; adenosylcobalamin biosynthesis; adenosylcobalamin from cob(II)yrinate a,c-diamide: step 7/7. Joins adenosylcobinamide-GDP and alpha-ribazole to generate adenosylcobalamin (Ado-cobalamin). Also synthesizes adenosylcobalamin 5'-phosphate from adenosylcobinamide-GDP and alpha-ribazole 5'-phosphate. This chain is Adenosylcobinamide-GDP ribazoletransferase, found in Salmonella newport (strain SL254).